A 113-amino-acid chain; its full sequence is Cell division protein FtsB (113 aa).

The Cytoplasmic portion of the chain corresponds to Met1–Leu3. A helical membrane pass occupies residues Ile4–Leu21. Topologically, residues Gly22 to His113 are periplasmic. The stretch at His34 to Gly63 forms a coiled coil. Residues Lys93–His113 form a disordered region.

This sequence belongs to the FtsB family. Part of a complex composed of FtsB, FtsL and FtsQ.

It localises to the cell inner membrane. In terms of biological role, essential cell division protein. May link together the upstream cell division proteins, which are predominantly cytoplasmic, with the downstream cell division proteins, which are predominantly periplasmic. This chain is Cell division protein FtsB, found in Cupriavidus pinatubonensis (strain JMP 134 / LMG 1197) (Cupriavidus necator (strain JMP 134)).